The primary structure comprises 465 residues: Hexokinase-4 (465 aa).

The region spanning 10-454 (ATKKEKVEQI…SGRGAALVSA (445 aa)) is the Hexokinase domain. Residues 67–203 (EGSEVGDFLS…DFEMDVVAMV (137 aa)) are hexokinase small subdomain. 78-83 (DLGGTN) contributes to the ATP binding site. Residues 151–152 (SF), 168–169 (TK), and 204–205 (ND) each bind substrate. The hexokinase large subdomain stretch occupies residues 204–443 (NDTVATMISC…CEITFIESEE (240 aa)). Thr-228 lines the ATP pocket. Substrate-binding residues include Asn-231, Glu-256, and Glu-290. ATP contacts are provided by residues 295–296 (GK), 332–336 (TRFVS), and 411–415 (SVYKL).

The protein belongs to the hexokinase family. Monomer. Interacts with MIDN; the interaction occurs preferentially at low glucose levels and results in inhibition of hexokinase activity. Interacts with GCKR; leading to sequestration in the nucleus. In terms of tissue distribution, expression is restricted to the liver and pancreatic islets (at protein level).

It is found in the cytoplasm. Its subcellular location is the nucleus. It localises to the mitochondrion. The enzyme catalyses a D-hexose + ATP = a D-hexose 6-phosphate + ADP + H(+). The catalysed reaction is D-fructose + ATP = D-fructose 6-phosphate + ADP + H(+). It catalyses the reaction D-glucose + ATP = D-glucose 6-phosphate + ADP + H(+). It carries out the reaction D-mannose + ATP = D-mannose 6-phosphate + ADP + H(+). It functions in the pathway carbohydrate metabolism; hexose metabolism. It participates in carbohydrate degradation; glycolysis; D-glyceraldehyde 3-phosphate and glycerone phosphate from D-glucose: step 1/4. With respect to regulation, subject to allosteric regulation. Low glucose and high fructose-6-phosphate triggers association with the inhibitor GCKR followed by sequestration in the nucleus. Functionally, catalyzes the phosphorylation of hexose, such as D-glucose, D-fructose and D-mannose, to hexose 6-phosphate (D-glucose 6-phosphate, D-fructose 6-phosphate and D-mannose 6-phosphate, respectively). Compared to other hexokinases, has a weak affinity for D-glucose, and is effective only when glucose is abundant. Mainly expressed in pancreatic beta cells and the liver and constitutes a rate-limiting step in glucose metabolism in these tissues. Since insulin secretion parallels glucose metabolism and the low glucose affinity of GCK ensures that it can change its enzymatic activity within the physiological range of glucose concentrations, GCK acts as a glucose sensor in the pancreatic beta cell. In pancreas, plays an important role in modulating insulin secretion. In liver, helps to facilitate the uptake and conversion of glucose by acting as an insulin-sensitive determinant of hepatic glucose usage. Required to provide D-glucose 6-phosphate for the synthesis of glycogen. Mediates the initial step of glycolysis by catalyzing phosphorylation of D-glucose to D-glucose 6-phosphate. In Rattus norvegicus (Rat), this protein is Hexokinase-4.